Consider the following 95-residue polypeptide: Co-chaperonin GroES (95 aa).

This sequence belongs to the GroES chaperonin family. As to quaternary structure, heptamer of 7 subunits arranged in a ring. Interacts with the chaperonin GroEL.

It localises to the cytoplasm. Together with the chaperonin GroEL, plays an essential role in assisting protein folding. The GroEL-GroES system forms a nano-cage that allows encapsulation of the non-native substrate proteins and provides a physical environment optimized to promote and accelerate protein folding. GroES binds to the apical surface of the GroEL ring, thereby capping the opening of the GroEL channel. The protein is Co-chaperonin GroES of Stenotrophomonas maltophilia (strain K279a).